The sequence spans 122 residues: Serum amyloid A-2 protein (122 aa).

Positions 1–19 (MKLLTSLVFCSLLLGVCHG) are cleaved as a signal peptide. The segment covering 89-108 (RGHEDTMADQEANRHGRSGK) has biased composition (basic and acidic residues). The tract at residues 89 to 122 (RGHEDTMADQEANRHGRSGKDPNYYRPPGLPAKY) is disordered.

This sequence belongs to the SAA family. In terms of assembly, apolipoprotein of the HDL complex. As to expression, expressed by the liver; secreted in plasma.

The protein resides in the secreted. In terms of biological role, major acute phase reactant. The protein is Serum amyloid A-2 protein of Mus musculus (Mouse).